Reading from the N-terminus, the 310-residue chain is Olfactory receptor 5P53 (310 aa).

Residues 1 to 25 (MEAENHTTVAELIILGLTEDPKLCI) lie on the Extracellular side of the membrane. The N-linked (GlcNAc...) asparagine glycan is linked to Asn-5. Residues 26 to 46 (VFFVIFLGVYIVTLVGNISII) traverse the membrane as a helical segment. Residues 47 to 54 (TLIRISSQ) are Cytoplasmic-facing. The chain crosses the membrane as a helical span at residues 55–75 (LHTPMYLFLSHLAFVDILYST). At 76-99 (SVSVIMHMELLGHGLALPVAACAA) the chain is on the extracellular side. Cys-97 and Cys-189 form a disulfide bridge. A helical membrane pass occupies residues 100-120 (QLCITVSFGSAECFLLAAMAY). At 121 to 133 (DRYVAICSPLLYS) the chain is on the cytoplasmic side. A helical membrane pass occupies residues 134–154 (TLMSPRVCFLLLGMSYVGGCM). Topologically, residues 155-196 (NGWTFTGCLLSLSFCGPNQIDHFFCDFSPLLKLSCSDVSIIG) are extracellular. A helical membrane pass occupies residues 197 to 217 (IIPSISSGSIIVVTVFVIAVS). Over 218 to 237 (YIYILITILNMRSTEGRHKA) the chain is Cytoplasmic. The helical transmembrane segment at 238 to 258 (FSTCTSHLTAVTLYYGTITFI) threads the bilayer. The Extracellular portion of the chain corresponds to 259 to 271 (YVMPKSNYSTEQN). Asn-265 carries an N-linked (GlcNAc...) asparagine glycan. Residues 272–292 (KVLSVFYTVVIPMLNPLIYSL) traverse the membrane as a helical segment. Over 293–310 (RNRDVKEALRKATVRVYS) the chain is Cytoplasmic.

This sequence belongs to the G-protein coupled receptor 1 family.

Its subcellular location is the cell membrane. In terms of biological role, potential odorant receptor. The sequence is that of Olfactory receptor 5P53 from Mus musculus (Mouse).